We begin with the raw amino-acid sequence, 328 residues long: Carbonic anhydrase-related protein 10 (328 aa).

The region spanning 31-301 is the Alpha-carbonic anhydrase domain; the sequence is GWWAYKEVVQ…LNNRCIRTNI (271 aa).

This sequence belongs to the alpha-carbonic anhydrase family.

Its function is as follows. Does not have a catalytic activity. This chain is Carbonic anhydrase-related protein 10 (CA10), found in Macaca fascicularis (Crab-eating macaque).